Consider the following 462-residue polypeptide: MICTRFAPSPTGYLHIGGLRTALFNYLYARANGGKFVLRIEDTDLKRNSVEAANAIVEAFKWCGLDYDGEIVYQSSRFDLYKKYIQKLLDENKAYKCYMSKAELDTLRAEQEARKERPKYDGRYRDFNGIPPKGIDPVIRIKAPLSGTIEFDDGIKGSMKFNANDILDDFIIARSDGTPTYNFTVVIDDALMGITDVIRGDDHLSNTPKQIVLYNALGFKIPKFYHVAMINGSDGRKLSKRHGATDVMEYKRMGYLPEALLNFLVRLGWSHGDDEIFSLDDMKKYFDPNHISKSSSTFNQSKLEWLNAYYIKNSSNKRLIKELKNFNINIENHPKKELLIDSFKERAKTLADMAKGIDSLLSRPKTYEQKAFNKFINENSKNLLQKFSEILDAQNLKAKEIEEKTMQFLEKEGEKLKNLAQPLRVAITGTSVSPSIFEVIEILGVNEIKLRIENLIKNKESL.

Residues 8 to 18 (PSPTGYLHIGG) carry the 'HIGH' region motif. A 'KMSKS' region motif is present at residues 237–241 (KLSKR). Residue K240 participates in ATP binding.

The protein belongs to the class-I aminoacyl-tRNA synthetase family. Glutamate--tRNA ligase type 1 subfamily. As to quaternary structure, monomer.

It localises to the cytoplasm. The enzyme catalyses tRNA(Glu) + L-glutamate + ATP = L-glutamyl-tRNA(Glu) + AMP + diphosphate. In terms of biological role, catalyzes the attachment of glutamate to tRNA(Glu) in a two-step reaction: glutamate is first activated by ATP to form Glu-AMP and then transferred to the acceptor end of tRNA(Glu). This chain is Glutamate--tRNA ligase 1, found in Campylobacter hominis (strain ATCC BAA-381 / DSM 21671 / CCUG 45161 / LMG 19568 / NCTC 13146 / CH001A).